The sequence spans 324 residues: G patch domain-containing protein 4 (324 aa).

Disordered stretches follow at residues methionine 1–leucine 30 and leucine 123–glutamate 324. In terms of domain architecture, G-patch spans glycine 11–alanine 57. Residues phenylalanine 14 to leucine 30 show a composition bias toward basic and acidic residues. The segment covering lysine 131–serine 141 has biased composition (low complexity). Residues serine 186–arginine 215 show a composition bias toward basic and acidic residues. Residues histidine 244–arginine 253 are compositionally biased toward basic residues. The span at alanine 254–glutamate 270 shows a compositional bias: basic and acidic residues. Positions proline 296–phenylalanine 309 are enriched in polar residues. Residues lysine 312 to glutamate 324 show a composition bias toward basic residues.

The protein is G patch domain-containing protein 4 (gpatch4) of Xenopus laevis (African clawed frog).